The primary structure comprises 178 residues: Dual-action ribosomal maturation protein DarP (178 aa).

The segment covering 1 to 14 (MTVSDHPQTVSQPD) has biased composition (polar residues). Positions 1 to 25 (MTVSDHPQTVSQPDPESESRPSKTR) are disordered.

The protein belongs to the DarP family.

The protein localises to the cytoplasm. Member of a network of 50S ribosomal subunit biogenesis factors which assembles along the 30S-50S interface, preventing incorrect 23S rRNA structures from forming. Promotes peptidyl transferase center (PTC) maturation. This Nitrosomonas europaea (strain ATCC 19718 / CIP 103999 / KCTC 2705 / NBRC 14298) protein is Dual-action ribosomal maturation protein DarP.